We begin with the raw amino-acid sequence, 23 residues long: Aurein-4.2 (23 aa).

This sequence belongs to the frog skin active peptide (FSAP) family. Aurein subfamily. As to expression, expressed by the skin dorsal glands.

The protein resides in the secreted. Functionally, has no antimicrobial or anticancer activity. This is Aurein-4.2 from Ranoidea aurea (Green and golden bell frog).